The primary structure comprises 325 residues: Protein FAM50B (325 aa).

An N-acetylalanine modification is found at alanine 2. 2 disordered regions span residues glutamine 92–arginine 111 and arginine 137–glutamate 160.

It belongs to the FAM50 family. In terms of tissue distribution, widely expressed. Mostly abundant in testis and adult and fetal brain.

The sequence is that of Protein FAM50B (FAM50B) from Homo sapiens (Human).